Here is a 68-residue protein sequence, read N- to C-terminus: Cytotoxic linear peptide (68 aa).

Positions 1–23 (MKTQFAILLIALVLFQMFSQSEA) are cleaved as a signal peptide. Leu-36 carries the post-translational modification Leucine amide. A propeptide spanning residues 40–68 (GLNELDDLDELFDGEISQADIDFLKELMS) is cleaved from the precursor.

This sequence belongs to the non-disulfide-bridged peptide (NDBP) superfamily. Short antimicrobial peptide (group 4) family. As to expression, expressed by the venom gland.

Its subcellular location is the secreted. It localises to the target cell membrane. Its function is as follows. Amphipathic peptide that has antibacterial activities. The chain is Cytotoxic linear peptide from Pandinus cavimanus (Tanzanian red clawed scorpion).